A 254-amino-acid polypeptide reads, in one-letter code: Bacteriorhodopsin-I (254 aa).

A propeptide spanning residues 1-6 is cleaved from the precursor; the sequence is MSQLAL. A Pyrrolidone carboxylic acid modification is found at Gln-7. Transmembrane regions (helical) follow at residues 16–36, 51–71, 91–111, 116–136, 144–164, 185–205, and 212–232; these read EGIW…YFIA, VITI…FFGF, YADW…LAGA, IGAL…ATLT, AFWT…VAVF, IILV…EGLA, and ETLL…FILL. An N6-(retinylidene)lysine modification is found at Lys-224.

The protein belongs to the archaeal/bacterial/fungal opsin family. Post-translationally, the covalent binding of retinal to the apoprotein, bacterioopsin, generates bacteriorhodopsin.

It localises to the cell membrane. Light-driven proton pump. The sequence is that of Bacteriorhodopsin-I (bop1) from Haloquadratum walsbyi (strain DSM 16854 / JCM 12705 / C23).